The primary structure comprises 167 residues: Large ribosomal subunit protein uL10 (167 aa).

It belongs to the universal ribosomal protein uL10 family. Part of the ribosomal stalk of the 50S ribosomal subunit. The N-terminus interacts with L11 and the large rRNA to form the base of the stalk. The C-terminus forms an elongated spine to which L12 dimers bind in a sequential fashion forming a multimeric L10(L12)X complex.

Functionally, forms part of the ribosomal stalk, playing a central role in the interaction of the ribosome with GTP-bound translation factors. The polypeptide is Large ribosomal subunit protein uL10 (Alkaliphilus oremlandii (strain OhILAs) (Clostridium oremlandii (strain OhILAs))).